A 203-amino-acid polypeptide reads, in one-letter code: ATP-dependent Clp protease proteolytic subunit 2 (203 aa).

S101 functions as the Nucleophile in the catalytic mechanism. H126 is a catalytic residue.

Belongs to the peptidase S14 family. In terms of assembly, fourteen ClpP subunits assemble into 2 heptameric rings which stack back to back to give a disk-like structure with a central cavity, resembling the structure of eukaryotic proteasomes.

It is found in the cytoplasm. The catalysed reaction is Hydrolysis of proteins to small peptides in the presence of ATP and magnesium. alpha-casein is the usual test substrate. In the absence of ATP, only oligopeptides shorter than five residues are hydrolyzed (such as succinyl-Leu-Tyr-|-NHMec, and Leu-Tyr-Leu-|-Tyr-Trp, in which cleavage of the -Tyr-|-Leu- and -Tyr-|-Trp bonds also occurs).. Functionally, cleaves peptides in various proteins in a process that requires ATP hydrolysis. Has a chymotrypsin-like activity. Plays a major role in the degradation of misfolded proteins. This Prochlorococcus marinus (strain MIT 9312) protein is ATP-dependent Clp protease proteolytic subunit 2.